Here is a 344-residue protein sequence, read N- to C-terminus: L-rhamnose-proton symporter (344 aa).

A run of 10 helical transmembrane segments spans residues 4-24 (AITM…CFYA), 38-58 (WSVG…ALLL), 68-88 (FNLS…IGNI), 101-121 (MGIG…TPII), 137-157 (TLLG…AGQL), 175-195 (LLLA…MNAA), 214-234 (LPSY…FCFI), 259-279 (ILLS…YAWG), 290-310 (MSWM…GLVL), and 321-341 (VAVL…VGLG).

Belongs to the L-rhamnose transporter (TC 2.A.7.6) family.

The protein resides in the cell inner membrane. It catalyses the reaction L-rhamnopyranose(in) + H(+)(in) = L-rhamnopyranose(out) + H(+)(out). Its function is as follows. Uptake of L-rhamnose across the cytoplasmic membrane with the concomitant transport of protons into the cell (symport system). This is L-rhamnose-proton symporter from Salmonella dublin (strain CT_02021853).